A 306-amino-acid polypeptide reads, in one-letter code: MQNIVDSIYQEMRSRTDRGKVANYIPQLACVDPNQFALTVVTQEGEVFSAGCAQTLFSIQSISKVFTLTMALGKLGDALWAQVGREPSGDPFNSIVQLEHEGGIPRNPFINAGAIAVADAIMGHNEPKETLAEILHFVRFVANDDSISIDEKVAQSEMMTGSRNASLAHFMASFERLENPVDKVLGTYFHHCSISMTTEQLARAGMFLVSNGTNHCTGMRVVPEHRARRINSLMLMCGHYDGSGEFAYRVGLPGKSGVGGGILAIAPGKASIAVWSPGLDKIGNSKLGTEALEMLVQETGWSIFGH.

7 residues coordinate substrate: Ser61, Asn111, Glu157, Asn164, Tyr188, Tyr240, and Val258.

This sequence belongs to the glutaminase family. As to quaternary structure, homotetramer.

The enzyme catalyses L-glutamine + H2O = L-glutamate + NH4(+). This Pseudoalteromonas atlantica (strain T6c / ATCC BAA-1087) protein is Glutaminase.